The chain runs to 206 residues: Adenylate kinase (206 aa).

Position 10–15 (10–15) interacts with ATP; that stretch reads GAGKGT. The segment at 30–59 is NMP; sequence STGDILREAVQKGTPLGKKAKEYMERGELV. Residues Thr31, 57 to 59, 82 to 85, and Gln89 each bind AMP; these read ELV and GFPR. ATP contacts are provided by residues Arg120, Arg124, and 133 to 134; that span reads VY. Residues 123–153 form an LID region; that stretch reads GRRINPETGEVYHVKYNPPPPGVKVIQREDD. AMP is bound at residue Arg161. Residue Lys189 coordinates ATP.

Belongs to the adenylate kinase family. In terms of assembly, monomer.

The protein resides in the cytoplasm. It carries out the reaction AMP + ATP = 2 ADP. Its pathway is purine metabolism; AMP biosynthesis via salvage pathway; AMP from ADP: step 1/1. Functionally, catalyzes the reversible transfer of the terminal phosphate group between ATP and AMP. Plays an important role in cellular energy homeostasis and in adenine nucleotide metabolism. The polypeptide is Adenylate kinase (Aquifex aeolicus (strain VF5)).